Reading from the N-terminus, the 278-residue chain is tRNA (guanine-N(7)-)-methyltransferase (278 aa).

The segment at Met1–Tyr42 is disordered. Glu106, Glu131, Asn160, and Asp183 together coordinate S-adenosyl-L-methionine. Asp183 is an active-site residue. Substrate contacts are provided by residues Lys187, Asp219, and Thr256–Glu259.

It belongs to the class I-like SAM-binding methyltransferase superfamily. TrmB family.

It carries out the reaction guanosine(46) in tRNA + S-adenosyl-L-methionine = N(7)-methylguanosine(46) in tRNA + S-adenosyl-L-homocysteine. The protein operates within tRNA modification; N(7)-methylguanine-tRNA biosynthesis. In terms of biological role, catalyzes the formation of N(7)-methylguanine at position 46 (m7G46) in tRNA. The protein is tRNA (guanine-N(7)-)-methyltransferase of Mycobacterium ulcerans (strain Agy99).